The following is a 283-amino-acid chain: Elongation factor Ts (283 aa).

The tract at residues 80–83 (TDFV) is involved in Mg(2+) ion dislocation from EF-Tu.

It belongs to the EF-Ts family.

It localises to the cytoplasm. In terms of biological role, associates with the EF-Tu.GDP complex and induces the exchange of GDP to GTP. It remains bound to the aminoacyl-tRNA.EF-Tu.GTP complex up to the GTP hydrolysis stage on the ribosome. This is Elongation factor Ts from Shigella boydii serotype 18 (strain CDC 3083-94 / BS512).